The chain runs to 299 residues: Protein PRY1 (299 aa).

A signal peptide spans 1–19 (MKLSKLSILTSALATSALA). A disordered region spans residues 103 to 157 (TDSTTTLTSSESTSQSLAQATTTSTPAAASTTSTPAATTTTSQAAATSSASSSDS). The SCP domain occupies 167–281 (LAEHNKKRAL…AWGDYVICSY (115 aa)).

The protein belongs to the CRISP family. In terms of processing, O-glycosylated.

The protein localises to the secreted. Secreted protein required for efficient export of lipids such as acetylated sterols. Acts in detoxification of hydrophobic compounds. The protein is Protein PRY1 of Saccharomyces cerevisiae (strain ATCC 204508 / S288c) (Baker's yeast).